The sequence spans 387 residues: Phosphoglycerate kinase (387 aa).

Substrate is bound by residues 21–23, arginine 36, 59–62, arginine 113, and arginine 146; these read DLN and HLGR. ATP is bound by residues lysine 197, glutamate 314, and 340 to 343; that span reads GGDT.

Belongs to the phosphoglycerate kinase family. Monomer.

Its subcellular location is the cytoplasm. It catalyses the reaction (2R)-3-phosphoglycerate + ATP = (2R)-3-phospho-glyceroyl phosphate + ADP. The protein operates within carbohydrate degradation; glycolysis; pyruvate from D-glyceraldehyde 3-phosphate: step 2/5. This is Phosphoglycerate kinase from Enterobacter sp. (strain 638).